Reading from the N-terminus, the 238-residue chain is Purine nucleoside phosphorylase DeoD-type (238 aa).

His4 is an a purine D-ribonucleoside binding site. Phosphate contacts are provided by residues Gly20, Arg24, Arg43, and 87-90; that span reads RVGS. Residues 179–181 and 203–204 contribute to the a purine D-ribonucleoside site; these read EME and SD. Asp204 functions as the Proton donor in the catalytic mechanism.

The protein belongs to the PNP/UDP phosphorylase family. Homohexamer; trimer of homodimers.

It carries out the reaction a purine D-ribonucleoside + phosphate = a purine nucleobase + alpha-D-ribose 1-phosphate. The enzyme catalyses a purine 2'-deoxy-D-ribonucleoside + phosphate = a purine nucleobase + 2-deoxy-alpha-D-ribose 1-phosphate. In terms of biological role, catalyzes the reversible phosphorolytic breakdown of the N-glycosidic bond in the beta-(deoxy)ribonucleoside molecules, with the formation of the corresponding free purine bases and pentose-1-phosphate. This chain is Purine nucleoside phosphorylase DeoD-type, found in Pasteurella multocida (strain Pm70).